A 516-amino-acid polypeptide reads, in one-letter code: rRNA N(6)-adenosine-methyltransferase ZCCHC4 (516 aa).

Residues Cys40, His42, Cys66, Cys75, Cys127, Cys130, His142, and His145 each coordinate Zn(2+). Residues 40-84 (CPHELGPTLLFVKVNQGKEETRRFYACSACRDRKDCNFFQWEDEK) form a GRF-type zinc finger. Residues 174–177 (QYLF), Arg204, Asp227, 245–246 (NM), and Asp278 contribute to the S-adenosyl-L-methionine site. Residues 339–360 (QVVDYDNHALYKHGKTGRKQSP) form a regulatory loop region. Residues Cys383, Cys386, His396, Cys397, Cys400, Cys403, His413, Cys414, Cys417, Cys420, His427, Cys428, Cys431, Cys434, His439, and Cys441 each contribute to the Zn(2+) site. Residues 398–448 (EHCNSCTSKDGRKWNHCFLCKKCVKPSWIHCSICNHCALPDHSCKGPKDGC) enclose the DHHC domain. A CCHC-type zinc finger spans residues 446–463 (DGCFICGELDHKRSACPN). Residues 472–484 (KAVRKQKQRKSNK) show a composition bias toward basic residues. The segment at 472–516 (KAVRKQKQRKSNKMKMETTKGQSMNHTSATRKKKRRERTHQYLCS) is disordered. Polar residues predominate over residues 490–499 (TKGQSMNHTS). A compositionally biased stretch (basic residues) spans 500–509 (ATRKKKRRER).

Belongs to the ZCCHC4 family. Interacts with components of the ASC-1 complex TRIP4, ASCC1, ASCC2 and ASCC3. Interact with AHCYL1 and AHCYL2. Interact with YTHDC2.

Its subcellular location is the cytoplasm. It is found in the nucleus. The protein resides in the nucleolus. It catalyses the reaction adenosine(4220) in 28S rRNA + S-adenosyl-L-methionine = N(6)-methyladenosine(4220) in 28S rRNA + S-adenosyl-L-homocysteine + H(+). In terms of biological role, rRNA N6-methyltransferase that specifically methylates the adenine in position 4220 of 28S rRNA. N6-methylation of adenine(4220) in 28S rRNA is required for translation. The chain is rRNA N(6)-adenosine-methyltransferase ZCCHC4 from Bos taurus (Bovine).